Consider the following 141-residue polypeptide: Large ribosomal subunit protein uL16 (141 aa).

A compositionally biased stretch (basic residues) spans 1–16; it reads MLMPRKPPKGFRKPHH. Residues 1 to 27 form a disordered region; that stretch reads MLMPRKPPKGFRKPHHPDRSGASKGGN.

It belongs to the universal ribosomal protein uL16 family. In terms of assembly, part of the 50S ribosomal subunit.

In terms of biological role, binds 23S rRNA and is also seen to make contacts with the A and possibly P site tRNAs. This is Large ribosomal subunit protein uL16 from Salinispora arenicola (strain CNS-205).